Reading from the N-terminus, the 557-residue chain is Hepatocyte nuclear factor 1-beta (557 aa).

The tract at residues 1–31 is dimerization; the sequence is MVSKLTSLQQELLSALLSSGVTKEVLVQALE. The 32-residue stretch at 1-32 folds into the HNF-p1 domain; it reads MVSKLTSLQQELLSALLSSGVTKEVLVQALEE. Residues Ser-49, Ser-52, Ser-75, and Ser-80 each carry the phosphoserine modification. Positions 64 to 85 are disordered; the sequence is TLTNGHAKGRLSGDEGSEDGDD. Residues 93 to 188 form the POU-specific atypical domain; that stretch reads KELQALNTEE…ILRQFNQTVQ (96 aa). The homeobox; HNF1-type DNA-binding region spans 231–311; the sequence is MRRNRFKWGP…NRRKEEAFRQ (81 aa). Residues 324–352 are disordered; sequence HSLNPLLSHGSPHHQPSSSPPNKLSGVRY. The segment covering 328–344 has biased composition (low complexity); that stretch reads PLLSHGSPHHQPSSSPP.

Belongs to the HNF1 homeobox family. In terms of assembly, binds DNA as a dimer. Can form homodimer or heterodimer with HNF1-alpha. Interacts (via HNF-p1 domain) with PCBD1; the interaction increases its transactivation activity.

Its subcellular location is the nucleus. Functionally, transcription factor that binds to the inverted palindrome 5'-GTTAATNATTAAC-3'. Binds to the FPC element in the cAMP regulatory unit of the PLAU gene. Transcriptional activity is increased by coactivator PCBD1. This Homo sapiens (Human) protein is Hepatocyte nuclear factor 1-beta (HNF1B).